The chain runs to 376 residues: Cinnamyl alcohol dehydrogenase 2 (376 aa).

Zn(2+) is bound at residue Cys-44. Position 46 (Ser-46) interacts with NADP(+). Residues His-66, Glu-67, Cys-97, Cys-100, Cys-103, Cys-111, and Cys-161 each coordinate Zn(2+). NADP(+) contacts are provided by residues Thr-165, 187 to 192 (GLGGLG), 210 to 215 (SRSSEK), Thr-250, Gly-274, and 297 to 299 (SQI).

Belongs to the zinc-containing alcohol dehydrogenase family. Homodimer. The cofactor is Zn(2+). In terms of tissue distribution, expressed at the base of the stems.

It carries out the reaction (E)-cinnamyl alcohol + NADP(+) = (E)-cinnamaldehyde + NADPH + H(+). It catalyses the reaction (E)-coniferol + NADP(+) = (E)-coniferaldehyde + NADPH + H(+). The enzyme catalyses (E)-sinapyl alcohol + NADP(+) = (E)-sinapaldehyde + NADPH + H(+). The catalysed reaction is (E)-4-coumaroyl alcohol + NADP(+) = (E)-4-coumaraldehyde + NADPH + H(+). It carries out the reaction (E)-caffeyl alcohol + NADP(+) = (E)-caffeyl aldehyde + NADPH + H(+). It functions in the pathway aromatic compound metabolism; phenylpropanoid biosynthesis. Functionally, involved in lignin biosynthesis. Catalyzes the final step specific for the production of lignin monomers. Catalyzes the NADPH-dependent reduction of coniferaldehyde, 5-hydroxyconiferaldehyde, sinapaldehyde, 4-coumaraldehyde and caffeyl aldehyde to their respective alcohols. This is Cinnamyl alcohol dehydrogenase 2 from Arabidopsis thaliana (Mouse-ear cress).